The chain runs to 285 residues: UPF0173 metal-dependent hydrolase Pnuc_1524 (285 aa).

This sequence belongs to the UPF0173 family.

In Polynucleobacter asymbioticus (strain DSM 18221 / CIP 109841 / QLW-P1DMWA-1) (Polynucleobacter necessarius subsp. asymbioticus), this protein is UPF0173 metal-dependent hydrolase Pnuc_1524.